Here is a 3108-residue protein sequence, read N- to C-terminus: Probable polyketide synthase 39 (3108 aa).

Residues 9 to 440 form the Ketosynthase family 3 (KS3) domain; it reads DDDVAVIGIG…GSNVCLILSE (432 aa). Active-site for beta-ketoacyl synthase activity residues include Cys-181, His-320, and His-363. The interval 643-676 is acyl/malonyl transferase; it reads GVSADIIIGHSLGEISSAYCSGMIDFQTLCYLTY. Catalysis depends on Ser-653, which acts as the For acyl/malonyl transferase activity. Residues 939–1068 form an N-terminal hotdog fold region; the sequence is HEKIKSEGPS…GNFSLFKHNI (130 aa). The 327-residue stretch at 939–1265 folds into the PKS/mFAS DH domain; the sequence is HEKIKSEGPS…CTIAASNPDS (327 aa). Residue His-980 is the Proton acceptor; for dehydratase activity of the active site. Positions 1085 to 1265 are C-terminal hotdog fold; it reads NFTSISKQDL…CTIAASNPDS (181 aa). Asp-1157 (proton donor; for dehydratase activity) is an active-site residue. The tract at residues 1375 to 1435 is disordered; that stretch reads NNNNNNNNNN…NNNNNNNNNN (61 aa). One can recognise a Carrier domain in the interval 2566–2643; that stretch reads GNNEIIHSTI…QSIEIIKSAL (78 aa). Position 2603 is an O-(pantetheine 4'-phosphoryl)serine (Ser-2603). Residues 2702–2722 traverse the membrane as a helical segment; it reads IFLTGSTGFLGAYLLMELIKM.

Pantetheine 4'-phosphate serves as cofactor.

The protein resides in the membrane. Functionally, probable polyketide synthase. The sequence is that of Probable polyketide synthase 39 (pks39) from Dictyostelium discoideum (Social amoeba).